The sequence spans 447 residues: Glutamate--tRNA ligase 2 (447 aa).

Positions 9–19 match the 'HIGH' region motif; that stretch reads PSPTGYLHIGN. A 'KMSKS' region motif is present at residues 240–244; the sequence is GLSKR. Lys-243 provides a ligand contact to ATP.

This sequence belongs to the class-I aminoacyl-tRNA synthetase family. Glutamate--tRNA ligase type 1 subfamily. As to quaternary structure, monomer.

It is found in the cytoplasm. It carries out the reaction tRNA(Glu) + L-glutamate + ATP = L-glutamyl-tRNA(Glu) + AMP + diphosphate. In terms of biological role, catalyzes the attachment of glutamate to tRNA(Glu) in a two-step reaction: glutamate is first activated by ATP to form Glu-AMP and then transferred to the acceptor end of tRNA(Glu). The chain is Glutamate--tRNA ligase 2 from Methylobacterium sp. (strain 4-46).